The primary structure comprises 1162 residues: Leptin receptor (1162 aa).

An N-terminal signal peptide occupies residues 1–21; that stretch reads MTCQKFYVVLLHWEFLYVITA. Residues 22–839 are Extracellular-facing; it reads LNLAYPTSPW…DIAKQQNDAG (818 aa). Intrachain disulfides connect Cys-37–Cys-90, Cys-89–Cys-99, Cys-131–Cys-142, Cys-186–Cys-195, and Cys-188–Cys-193. 4 N-linked (GlcNAc...) asparagine glycosylation sites follow: Asn-55, Asn-56, Asn-73, and Asn-98. N-linked (GlcNAc...) asparagine glycosylation occurs at Asn-187. A Fibronectin type-III 1 domain is found at 238–331; sequence PPLGLRMEVT…LPQLFTTQDV (94 aa). 3 N-linked (GlcNAc...) asparagine glycosylation sites follow: Asn-275, Asn-345, and Asn-356. 2 cysteine pairs are disulfide-bonded: Cys-350–Cys-410 and Cys-411–Cys-416. N-linked (GlcNAc...) asparagine glycosylation occurs at Asn-431. Cystine bridges form between Cys-434–Cys-445, Cys-471–Cys-526, and Cys-486–Cys-496. A leptin-binding region spans residues 465 to 482; it reads HRRSLYCPDNPSIRPTSE. Residues Asn-514, Asn-622, Asn-657, Asn-668, Asn-686, Asn-695, Asn-698, and Asn-726 are each glycosylated (N-linked (GlcNAc...) asparagine). Fibronectin type-III domains follow at residues 537–632, 637–729, and 738–831; these read PPSN…TLVM, PMRG…NLTF, and AVQS…KDDI. A WSXWS motif motif is present at residues 620–624; sequence WSNWS. A helical transmembrane segment spans residues 840 to 860; that stretch reads LYVIVPIIISSCVLLLGTLLI. Residues 861–1162 are Cytoplasmic-facing; sequence SHQRMKKLFW…IENKMCDLTV (302 aa). A Box 1 motif motif is present at residues 869–877; sequence FWDDVPNPK. Ser-880 is subject to Phosphoserine. The interval 891–896 is required for JAK2 activation; that stretch reads ETFEHL. The interval 896–904 is required for STAT3 phosphorylation; sequence LFTKHAESV. Phosphotyrosine; by JAK2 is present on Tyr-985. At Tyr-1077 the chain carries Phosphotyrosine. Phosphotyrosine; by JAK2 is present on Tyr-1138.

The protein belongs to the type I cytokine receptor family. Type 2 subfamily. In terms of assembly, present as a mixture of monomers and dimers. The phosphorylated receptor binds a number of SH2 domain-containing proteins such as JAK2, STAT3, PTPN11, and SOCS3. Interaction with SOCS3 inhibits JAK/STAT signaling and MAPK cascade. Post-translationally, on ligand binding, phosphorylated on two conserved C-terminal tyrosine residues (isoform B only) by JAK2. Tyr-985 is required for complete binding and activation of PTPN11, ERK/FOS activation,for interaction with SOCS3 and SOCS3 mediated inhibition of leptin signaling. Phosphorylation on Tyr-1138 is required for STAT3 binding/activation. Phosphorylation of Tyr-1077 has a more accessory role. Isoform B is expressed in kidney, liver, lung, ovary, spleen and uterus. Increased level in uterus during gestation. Isoform A and isoform C are predominantly expressed in cerebral microvessels and choroid plexus, with lower levels in cortex, cerebellum and hypothalamus but also liver and lung. Isoform F is expressed at high levels in brain, liver and spleen and less in stomach, kidney, thymus, heart, lung and hypothalamus.

It is found in the cell membrane. The protein localises to the basolateral cell membrane. Its subcellular location is the secreted. In terms of biological role, receptor for hormone LEP/leptin. On ligand binding, mediates LEP central and peripheral effects through the activation of different signaling pathways such as JAK2/STAT3 and MAPK cascade/FOS. In the hypothalamus, LEP acts as an appetite-regulating factor that induces a decrease in food intake and an increase in energy consumption by inducing anorexinogenic factors and suppressing orexigenic neuropeptides, also regulates bone mass and secretion of hypothalamo-pituitary-adrenal hormones. In the periphery, increases basal metabolism, influences reproductive function, regulates pancreatic beta-cell function and insulin secretion, is pro-angiogenic and affects innate and adaptive immunity. Control of energy homeostasis and melanocortin production (stimulation of POMC and full repression of AgRP transcription) is mediated by STAT3 signaling, whereas distinct signals regulate NPY and the control of fertility, growth and glucose homeostasis. Involved in the regulation of counter-regulatory response to hypoglycemia by inhibiting neurons of the parabrachial nucleus. Has a specific effect on T lymphocyte responses, differentially regulating the proliferation of naive and memory T-cells. Leptin increases Th1 and suppresses Th2 cytokine production. Functionally, may transport LEP across the blood-brain barrier. Binds LEP and mediates LEP endocytosis. Does not induce phosphorylation of and activate STAT3. Its function is as follows. Antagonizes Isoform A and isoform B-mediated LEP binding and endocytosis. This chain is Leptin receptor (Lepr), found in Rattus norvegicus (Rat).